We begin with the raw amino-acid sequence, 72 residues long: Candidate secreted effector protein MPL124499 (72 aa).

An N-terminal signal peptide occupies residues 1 to 21 (MKLSIFAAIFMAFVSLNQVFG).

It belongs to the CPGH1 family.

It localises to the secreted. The protein resides in the host cell. The protein localises to the host cytoplasm. Its subcellular location is the host nucleus. Functionally, rust effector delivered into infected tissues to modulate host functions and contribute to pathogen virulence. Enhances leaf colonization by the bacteria Pseudomonas syringae and the oomycete Hyaloperonospora arabidopsidis pathogens in an Arabidopsis thaliana infection model. The protein is Candidate secreted effector protein MPL124499 of Melampsora larici-populina (strain 98AG31 / pathotype 3-4-7) (Poplar leaf rust fungus).